A 329-amino-acid polypeptide reads, in one-letter code: Peroxidase 50 (329 aa).

The signal sequence occupies residues 1-25; that stretch reads MVVVNKTNLLLLLLSLCLTLDLSSA. 4 disulfide bridges follow: Cys36–Cys119, Cys69–Cys74, Cys125–Cys325, and Cys204–Cys236. The active-site Proton acceptor is His67. Residues Asp68, Val71, Gly73, Asp75, and Ser77 each contribute to the Ca(2+) site. Pro167 serves as a coordination point for substrate. His197 lines the heme b pocket. Thr198 provides a ligand contact to Ca(2+). An N-linked (GlcNAc...) asparagine glycan is attached at Asn215. Ca(2+) is bound by residues Asp249, Thr252, and Asp257.

This sequence belongs to the peroxidase family. Classical plant (class III) peroxidase subfamily. Heme b is required as a cofactor. Ca(2+) serves as cofactor. In terms of tissue distribution, expressed in roots and leaves.

The protein resides in the secreted. The enzyme catalyses 2 a phenolic donor + H2O2 = 2 a phenolic radical donor + 2 H2O. In terms of biological role, removal of H(2)O(2), oxidation of toxic reductants, biosynthesis and degradation of lignin, suberization, auxin catabolism, response to environmental stresses such as wounding, pathogen attack and oxidative stress. These functions might be dependent on each isozyme/isoform in each plant tissue. Its function is as follows. Exhibits a Ca(2+)-pectate binding affinity which could be interpreted in vivo as a specificity to interact with the pectic structure of the cell wall. In Arabidopsis thaliana (Mouse-ear cress), this protein is Peroxidase 50 (PER50).